We begin with the raw amino-acid sequence, 210 residues long: Mitochondrial coenzyme A diphosphatase NUDT8 (210 aa).

The Nudix hydrolase domain maps to 25–172 (LRSRPAAAAV…HFSYTLPVFL (148 aa)). Position 70 is an N6-succinyllysine (lysine 70). The short motif at 70–91 (KCDPDDQDVIHTALRETQEELG) is the Nudix box element. The Mg(2+) site is built by glutamate 85 and glutamate 89. Lysine 96 carries the post-translational modification N6-succinyllysine.

This sequence belongs to the Nudix hydrolase family. Monomer. Mg(2+) serves as cofactor. The cofactor is Mn(2+). Expressed at the highest levels in the kidneys, heart, brown adipose tissue and liver (at protein level). Expressed at lower levels in the brain, skeletal muscle, and white adipose tissue (at protein level).

The protein localises to the mitochondrion. The enzyme catalyses an acyl-CoA + H2O = an acyl-4'-phosphopantetheine + adenosine 3',5'-bisphosphate + 2 H(+). It catalyses the reaction CoA + H2O = (R)-4'-phosphopantetheine + adenosine 3',5'-bisphosphate + 2 H(+). The catalysed reaction is acetyl-CoA + H2O = S-acetyl-4'-phosphopantetheine + adenosine 3',5'-bisphosphate + 2 H(+). It carries out the reaction butanoyl-CoA + H2O = S-butanoyl-4'-phosphopantetheine + adenosine 3',5'-bisphosphate + 2 H(+). The enzyme catalyses hexanoyl-CoA + H2O = hexanoyl-4'-phosphopantetheine + adenosine 3',5'-bisphosphate + 2 H(+). It catalyses the reaction octanoyl-CoA + H2O = S-octanoyl-4'-phosphopantetheine + adenosine 3',5'-bisphosphate + 2 H(+). The catalysed reaction is propanoyl-CoA + H2O = propanoyl-4'-phosphopantetheine + adenosine 3',5'-bisphosphate + 2 H(+). It carries out the reaction malonyl-CoA + H2O = malonyl-4'-phosphopantetheine + adenosine 3',5'-bisphosphate + 2 H(+). The enzyme catalyses succinyl-CoA + H2O = succinyl-4'-phosphopantetheine + adenosine 3',5'-bisphosphate + 2 H(+). It catalyses the reaction a 5'-end CoA-ribonucleoside in mRNA + H2O = a 5'-end phospho-adenosine-phospho-ribonucleoside in mRNA + (R)-4'-phosphopantetheine + 2 H(+). Acyl-CoA diphosphatase that mediates the hydrolysis of a wide range of CoA and CoA esters yielding 3',5'-ADP and the corresponding 4'-phosphopantetheine derivative as products. Hydrolyzes short- and medium-chain acyl-CoAs, exhibiting the highest activity toward free CoA, hexanoyl-CoA, and octanoyl-CoA and the lowest activity against acetyl-CoA. Exhibits decapping activity towards dpCoA-capped RNAs in vitro. In Mus musculus (Mouse), this protein is Mitochondrial coenzyme A diphosphatase NUDT8 (Nudt8).